The chain runs to 557 residues: Carbamoyl phosphate synthase large chain, N-terminal section (557 aa).

The interval 1–402 (MPKRTDIKKI…ALLKAVRSLE (402 aa)) is carboxyphosphate synthetic domain. ATP contacts are provided by Arg129, Arg169, Gly175, Gly176, Lys208, Leu210, Glu215, Gly241, Val242, His243, Gln285, and Glu299. An ATP-grasp domain is found at 133-328 (KETMESIGLK…IAKVAAKLAV (196 aa)). Residues Gln285, Glu299, and Asn301 each coordinate Mg(2+). 3 residues coordinate Mn(2+): Gln285, Glu299, and Asn301. The tract at residues 403–553 (LDRYGLAFPK…PYYTVDGQEI (151 aa)) is oligomerization domain.

The protein belongs to the CarB family. As to quaternary structure, composed of two chains; the small (or glutamine) chain promotes the hydrolysis of glutamine to ammonia, which is used by the large (or ammonia) chain to synthesize carbamoyl phosphate. Tetramer of heterodimers (alpha,beta)4. The cofactor is Mg(2+). Mn(2+) serves as cofactor.

The catalysed reaction is hydrogencarbonate + L-glutamine + 2 ATP + H2O = carbamoyl phosphate + L-glutamate + 2 ADP + phosphate + 2 H(+). It carries out the reaction hydrogencarbonate + NH4(+) + 2 ATP = carbamoyl phosphate + 2 ADP + phosphate + 2 H(+). It functions in the pathway amino-acid biosynthesis; L-arginine biosynthesis; carbamoyl phosphate from bicarbonate: step 1/1. It participates in pyrimidine metabolism; UMP biosynthesis via de novo pathway; (S)-dihydroorotate from bicarbonate: step 1/3. In terms of biological role, large subunit of the glutamine-dependent carbamoyl phosphate synthetase (CPSase). CPSase catalyzes the formation of carbamoyl phosphate from the ammonia moiety of glutamine, carbonate, and phosphate donated by ATP, constituting the first step of 2 biosynthetic pathways, one leading to arginine and/or urea and the other to pyrimidine nucleotides. The large subunit (synthetase) binds the substrates ammonia (free or transferred from glutamine from the small subunit), hydrogencarbonate and ATP and carries out an ATP-coupled ligase reaction, activating hydrogencarbonate by forming carboxy phosphate which reacts with ammonia to form carbamoyl phosphate. The sequence is that of Carbamoyl phosphate synthase large chain, N-terminal section (carB1) from Aquifex aeolicus (strain VF5).